Reading from the N-terminus, the 230-residue chain is Orotidine 5'-phosphate decarboxylase (230 aa).

Substrate is bound by residues Asp-10, Lys-32, 59 to 68, Thr-118, Arg-179, Gln-188, Gly-208, and Arg-209; that span reads DLKLHDIPNT. The Proton donor role is filled by Lys-61.

It belongs to the OMP decarboxylase family. Type 1 subfamily. Homodimer.

The enzyme catalyses orotidine 5'-phosphate + H(+) = UMP + CO2. Its pathway is pyrimidine metabolism; UMP biosynthesis via de novo pathway; UMP from orotate: step 2/2. Functionally, catalyzes the decarboxylation of orotidine 5'-monophosphate (OMP) to uridine 5'-monophosphate (UMP). The sequence is that of Orotidine 5'-phosphate decarboxylase from Opitutus terrae (strain DSM 11246 / JCM 15787 / PB90-1).